The sequence spans 387 residues: Alkanesulfonate monooxygenase (387 aa).

Belongs to the SsuD family.

It carries out the reaction an alkanesulfonate + FMNH2 + O2 = an aldehyde + FMN + sulfite + H2O + 2 H(+). Its function is as follows. Catalyzes the desulfonation of aliphatic sulfonates. The chain is Alkanesulfonate monooxygenase from Ralstonia nicotianae (strain ATCC BAA-1114 / GMI1000) (Ralstonia solanacearum).